Reading from the N-terminus, the 255-residue chain is Proteasome subunit alpha (255 aa).

Positions 224–255 (RLEELLGERGPAQHAPEEPADPEPEPPIAPPG) are disordered.

It belongs to the peptidase T1A family. The 20S proteasome core is composed of 14 alpha and 14 beta subunits that assemble into four stacked heptameric rings, resulting in a barrel-shaped structure. The two inner rings, each composed of seven catalytic beta subunits, are sandwiched by two outer rings, each composed of seven alpha subunits. The catalytic chamber with the active sites is on the inside of the barrel. Has a gated structure, the ends of the cylinder being occluded by the N-termini of the alpha-subunits. Is capped by the proteasome-associated ATPase, ARC.

It is found in the cytoplasm. It participates in protein degradation; proteasomal Pup-dependent pathway. With respect to regulation, the formation of the proteasomal ATPase ARC-20S proteasome complex, likely via the docking of the C-termini of ARC into the intersubunit pockets in the alpha-rings, may trigger opening of the gate for substrate entry. Interconversion between the open-gate and close-gate conformations leads to a dynamic regulation of the 20S proteasome proteolysis activity. In terms of biological role, component of the proteasome core, a large protease complex with broad specificity involved in protein degradation. This chain is Proteasome subunit alpha, found in Nocardioides sp. (strain ATCC BAA-499 / JS614).